We begin with the raw amino-acid sequence, 132 residues long: Fatty acid-binding protein, intestinal (132 aa).

Alanine 2 bears the N-acetylalanine mark. Hexadecanoate is bound by residues tryptophan 83 and arginine 107. Residues tryptophan 83 and arginine 107 each coordinate tetradecanoate.

Belongs to the calycin superfamily. Fatty-acid binding protein (FABP) family.

Its subcellular location is the cytoplasm. In terms of biological role, FABPs are thought to play a role in the intracellular transport of long-chain fatty acids and their acyl-CoA esters. The chain is Fatty acid-binding protein, intestinal (fabp2) from Xenopus laevis (African clawed frog).